We begin with the raw amino-acid sequence, 508 residues long: Photosystem II CP47 reaction center protein (508 aa).

6 consecutive transmembrane segments (helical) span residues 21 to 36 (SVHI…WAGS), 101 to 115 (IVFS…IWHW), 140 to 156 (GIHL…FGAF), 203 to 218 (IAAG…FHLS), 237 to 252 (VLSS…AFVV), and 457 to 472 (SFAL…HGAR).

This sequence belongs to the PsbB/PsbC family. PsbB subfamily. PSII is composed of 1 copy each of membrane proteins PsbA, PsbB, PsbC, PsbD, PsbE, PsbF, PsbH, PsbI, PsbJ, PsbK, PsbL, PsbM, PsbT, PsbX, PsbY, PsbZ, Psb30/Ycf12, at least 3 peripheral proteins of the oxygen-evolving complex and a large number of cofactors. It forms dimeric complexes. The cofactor is Binds multiple chlorophylls. PSII binds additional chlorophylls, carotenoids and specific lipids..

Its subcellular location is the plastid. It is found in the chloroplast thylakoid membrane. In terms of biological role, one of the components of the core complex of photosystem II (PSII). It binds chlorophyll and helps catalyze the primary light-induced photochemical processes of PSII. PSII is a light-driven water:plastoquinone oxidoreductase, using light energy to abstract electrons from H(2)O, generating O(2) and a proton gradient subsequently used for ATP formation. In Aethionema grandiflorum (Persian stone-cress), this protein is Photosystem II CP47 reaction center protein.